The sequence spans 41 residues: Trypsin inhibitor (41 aa).

Intrachain disulfides connect cysteine 15–cysteine 26, cysteine 17–cysteine 24, and cysteine 29–cysteine 37.

Functionally, has two active sites that simultaneously bind and inhibit trypsin. The protein is Trypsin inhibitor of Trichosanthes kirilowii (Chinese snake gourd).